Here is a 240-residue protein sequence, read N- to C-terminus: Methylthioribulose-1-phosphate dehydratase (240 aa).

Over residues 1–10 (MAQEIEKTNN) the composition is skewed to basic and acidic residues. The interval 1–20 (MAQEIEKTNNDHLVQSSDPE) is disordered. Cys100 lines the substrate pocket. Residues His117 and His119 each contribute to the Zn(2+) site. Residue Glu146 is the Proton donor/acceptor of the active site. Position 202 (His202) interacts with Zn(2+).

The protein belongs to the aldolase class II family. MtnB subfamily. Zn(2+) serves as cofactor.

It localises to the cytoplasm. It carries out the reaction 5-(methylsulfanyl)-D-ribulose 1-phosphate = 5-methylsulfanyl-2,3-dioxopentyl phosphate + H2O. The protein operates within amino-acid biosynthesis; L-methionine biosynthesis via salvage pathway; L-methionine from S-methyl-5-thio-alpha-D-ribose 1-phosphate: step 2/6. Functionally, catalyzes the dehydration of methylthioribulose-1-phosphate (MTRu-1-P) into 2,3-diketo-5-methylthiopentyl-1-phosphate (DK-MTP-1-P). The sequence is that of Methylthioribulose-1-phosphate dehydratase from Aspergillus fumigatus (strain CBS 144.89 / FGSC A1163 / CEA10) (Neosartorya fumigata).